Here is a 493-residue protein sequence, read N- to C-terminus: Isoniazid-induced protein IniC (493 aa).

The protein is Isoniazid-induced protein IniC (iniC) of Mycobacterium tuberculosis (strain CDC 1551 / Oshkosh).